Here is a 2517-residue protein sequence, read N- to C-terminus: MKPMKKACTGLSGPGSGSKSPPATRAKALRRRGAGEGDKPEEEDDEAQQPQPQSGPEEAEEGEEEEAERGPGAEGPPLELHPGDPAPGPAEDPKGDGEAGRWEPSLSRKTATFKSRAPKKKYVEEHGAGSSGVAGAPEERVRTPEEASGLGVPPRPPTSTRSSSTDTASEHSADLEDEPAEACGPGPWPPGSTSGSYDLRQLRSQRVLARRGDGLFLPAVVRQVRRSQDLGVQFPGDRALTFYEGVPGAGVDVVLDATPPPGALVVGTAVCTCVEPGVAAYREGVVVEVATKPAAYKVRLSPGPSSQPGLPGSLPQPPQPLHREPEEAVWVARSSLRLLRPPWEPETMLRKPPTGPEEEQAEPGATLPPCPAALDPKQPEDAEVSKISFGGNLGTHCEEGEEKHPPALGTPALLPLPPPQLLSPPPKSPAFVGPGRPGEQPSPCQEGSQGGSRSSSVASLEKGTAPAARARTPLTAAQQKYKKGDVVCTPSGIRKKFNGKQWRRLCSRDGCMKESQRRGYCSRHLSMRTKEMEGLADSGPGGAGRPAAVAAREGSTEFDWGDETSRDSEASSVAARGDSRPRLVAPADLSRFEFDECEAAVMLVSLGSSRSGTPSFSPVSTQSPFSPAPSPSPSPLFGFRPANFSPINASPVIQRTAVRSRHLSASTPKAGVLTPPDLGPHPPPPAPRERHSSGILPTFQTNLTFTVPISPGRRKTELLPHPGALGAPGAGGGGAAPDFPKSDSLDSGVDSVSHTPTPSTPAGFRAVSPAVPFSRSRQPSPLLLLPPPAGLTSDPGPSVRRVPAVQRDSPVIVRNPDVPLPSKFPGEVGTAGEVRAGGPGRGCRETPVPPGVASGKPGLPPPLPAPVPITVPPAAPTAVAQPMPAFGLASSPFQPVAFHPSPAALLPVLVPSSYTSHPAPKKEVIMGRPGTVWTNVEPRSVAVFPWHSLVPFLAPSQPDPSVQPSEAQQPASHPVASNQSKEPAESAAVAHERPPGGTGSADPERPPGATCPESPGPGPPHPLGVVESGKGPPPTTEEEASGPPGEPRLDSETESDHDDAFLSIMSPEIQLPLPPGKRRTQSLSALPKERDSSSEKDGRSPNKREKDHIRRPMNAFMIFSKRHRALVHQRHPNQDNRTVSKILGEWWYALGPKEKQKYHDLAFQVKEAHFKAHPDWKWCNKDRKKSSSEAKPTSLGLAGGHKETRERSMSETGTAAAPGVSSELLSVAAQTLLSSDTKAPGSSSCGAERLHTVGGPGSARPRAFSHSGVHSLDGGEVDSQALQELTQMVSGPASYSGPKPSTQYGAPGPFAAPGEGGALAATGRPPLLPTRASRSQRAASEDMTSDEERMVICEEEGDDDVIADDGFGTTDIDLKCKERVTDSESGDSSGEDPEGNKGFGRKVFSPVIRSSFTHCRPPLDPEPPGPPDPPVAFGKGYGSAPSSSASSPASSSASAATSFSLGSGTFKAQESGQGSTAGPLRPPPPGAGGPATPSKATRFLPMDPATFRRKRPESVGGLEPPGPSVIAAPPSGGGNILQTLVLPPNKEEQEGGGARVPSAPAPSLAYGAPAAPLSRPAATMVTNVVRPVSSTPVPIASKPFPTSGRAEASPNDTAGARTEMGTGSRVPGGSPLGVSLVYSDKKSAAATSPAPHLVAGPLLGTVGKAPATVTNLLVGTPGYGAPAPPAVQFIAQGAPGGGTTAGSGAGAGSGPNGPVPLGILQPGALGKAGGITQVQYILPTLPQQLQVAPAPAPAPGTKAAAPSGPAPTTSIRFTLPPGTSTNGKVLAATAPTPGIPILQSVPSAPPPKAQSVSPVQAPPPGGSAQLLPGKVLVPLAAPSMSVRGGGAGQPLPLVSPPFSVPVQNGAQPPSKIIQLTPVPVSTPSGLVPPLSPATLPGPTSQPQKVLLPSSTRITYVQSAGGHALPLGTSPASSQAGTVTSYGPTSSVALGFTSLGPSGPAFVQPLLSAGQAPLLAPGQVGVSPVPSPQLPPACAAPGGPVITAFYSGSPAPTSSAPLAQPSQAPPSLVYTVATSTTPPAATILPKGPPAPATATPAPTSPFPSATAGSMTYSLVAPKAQRPSPKAPQKVKAAIASIPVGSFEAGASGRPGPAPRQPLEPGPVREPTAPESELEGQPTPPAPPPLPETWTPTARSSPPLPPPAEERTSAKGPETMASKFPSSSSDWRVPGQGLENRGEPPTPPSPAPAPAVAPGGSSESSSGRAAGDTPERKEAAGTGKKVKVRPPPLKKTFDSVDNRVLSEVDFEERFAELPEFRPEEVLPSPTLQSLATSPRAILGSYRKKRKNSTDLDSAPEDPTSPKRKMRRRSSCSSEPNTPKSAKCEGDIFTFDRTGTEAEDVLGELEYDKVPYSSLRRTLDQRRALVMQLFQDHGFFPSAQATAAFQARYADIFPSKVCLQLKIREVRQKIMQAATPTEQPPGAEAPLPVPPPTGTAAAPAPTPSPAGGPDPTSPSSDSGTAQAAPPLPPPPESGPGQPGWEGAPQPSPPPPGPSTAATGR.

6 disordered regions span residues 1 to 197 (MKPM…SGSY), 300 to 325 (LSPGPSSQPGLPGSLPQPPQPLHREP), 342 to 483 (PWEP…KYKK), 531 to 579 (EMEG…RGDS), 608 to 640 (SSRSGTPSFSPVSTQSPFSPAPSPSPSPLFGFR), and 658 to 767 (VRSR…FRAV). Positions 57–67 (EEAEEGEEEEA) are enriched in acidic residues. Over residues 91-101 (EDPKGDGEAGR) the composition is skewed to basic and acidic residues. Low complexity-rich tracts occupy residues 158 to 167 (TSTRSSSTDT) and 300 to 313 (LSPGPSSQPGLPGS). The span at 396 to 405 (HCEEGEEKHP) shows a compositional bias: basic and acidic residues. Positions 414 to 428 (LPLPPPQLLSPPPKS) are enriched in pro residues. Low complexity predominate over residues 451–477 (GSRSSSVASLEKGTAPAARARTPLTAA). The segment covering 608–619 (SSRSGTPSFSPV) has biased composition (polar residues). Residues 677 to 686 (DLGPHPPPPA) are compositionally biased toward pro residues. Positions 698–707 (TFQTNLTFTV) are enriched in polar residues. Positions 726-735 (GAPGAGGGGA) are enriched in gly residues. 2 positions are modified to phosphoserine: S776 and S780. 7 disordered regions span residues 812–842 (IVRNPDVPLPSKFPGEVGTAGEVRAGGPGRG), 955–1110 (PSQP…DHIR), 1179–1220 (CNKD…APGV), 1235–1274 (SDTKAPGSSSCGAERLHTVGGPGSARPRAFSHSGVHSLDG), 1290–1347 (SGPA…TSDE), 1379–1539 (RVTD…ILQT), and 1595–1628 (IASKPFPTSGRAEASPNDTAGARTEMGTGSRVPG). Positions 937-955 (EPRSVAVFPWHSLVPFLAP) are interaction with ATXN1. Residues 959-981 (DPSVQPSEAQQPASHPVASNQSK) show a composition bias toward polar residues. Residues S1055 and S1082 each carry the phosphoserine modification. 3 stretches are compositionally biased toward basic and acidic residues: residues 1087 to 1110 (PKERDSSSEKDGRSPNKREKDHIR), 1179 to 1188 (CNKDRKKSSS), and 1200 to 1209 (GHKETRERSM). Residue R1099 is modified to Omega-N-methylarginine. Residues 1109–1177 (IRRPMNAFMI…AHFKAHPDWK (69 aa)) constitute a DNA-binding region (HMG box). S1186 carries the phosphoserine modification. Polar residues predominate over residues 1235 to 1245 (SDTKAPGSSSC). S1271 bears the Phosphoserine mark. Positions 1305 to 1323 (GAPGPFAAPGEGGALAATG) are enriched in low complexity. Residues S1340, S1345, and S1405 each carry the phosphoserine modification. Over residues 1418–1430 (PLDPEPPGPPDPP) the composition is skewed to pro residues. Positions 1439 to 1456 (SAPSSSASSPASSSASAA) are enriched in low complexity. Over residues 1457-1474 (TSFSLGSGTFKAQESGQG) the composition is skewed to polar residues. Phosphoserine occurs at positions 1609, 1630, and 1648. An Asymmetric dimethylarginine modification is found at R1772. Positions 1799 to 1818 (QSVPSAPPPKAQSVSPVQAP) are disordered. Omega-N-methylarginine is present on R1843. Disordered regions lie at residues 2039–2064 (AATILPKGPPAPATATPAPTSPFPSA), 2100–2342 (SFEA…AKCE), and 2430–2517 (AATP…ATGR). Positions 2051-2064 (ATATPAPTSPFPSA) are enriched in low complexity. Pro residues-rich tracts occupy residues 2110-2119 (GPAPRQPLEP) and 2136-2145 (PTPPAPPPLP). A compositionally biased stretch (low complexity) spans 2146–2155 (ETWTPTARSS). K2177 carries the post-translational modification N6-acetyllysine. The segment covering 2198–2209 (PPTPPSPAPAPA) has biased composition (pro residues). At T2200 the chain carries Phosphothreonine. Position 2203 is a phosphoserine (S2203). Residues 2210–2225 (VAPGGSSESSSGRAAG) show a composition bias toward low complexity. Over residues 2249–2278 (KTFDSVDNRVLSEVDFEERFAELPEFRPEE) the composition is skewed to basic and acidic residues. Phosphoserine occurs at positions 2260, 2282, 2287, 2291, 2298, and 2306. T2307 carries the post-translational modification Phosphothreonine. A phosphoserine mark is found at S2311 and S2318. Over residues 2457–2469 (APTPSPAGGPDPT) the composition is skewed to pro residues. At S2504 the chain carries Phosphoserine.

In terms of assembly, found in a complex with ATXN1 and ATXN1L. Interacts with ATXN1. As to expression, expressed in fetal brain.

The protein resides in the nucleus. In terms of biological role, transcriptional repressor which plays a role in development of the central nervous system (CNS). In concert with ATXN1 and ATXN1L, involved in brain development. The chain is Protein capicua homolog (CIC) from Homo sapiens (Human).